Reading from the N-terminus, the 269-residue chain is Energy-coupling factor transporter ATP-binding protein EcfA1 (269 aa).

The ABC transporter domain maps to 8–242; it reads IVFKNVSFQY…AEELTTIGLD (235 aa). 42–49 lines the ATP pocket; that stretch reads GHNGSGKS.

The protein belongs to the ABC transporter superfamily. Energy-coupling factor EcfA family. Forms a stable energy-coupling factor (ECF) transporter complex composed of 2 membrane-embedded substrate-binding proteins (S component), 2 ATP-binding proteins (A component) and 2 transmembrane proteins (T component).

It localises to the cell membrane. In terms of biological role, ATP-binding (A) component of a common energy-coupling factor (ECF) ABC-transporter complex. Unlike classic ABC transporters this ECF transporter provides the energy necessary to transport a number of different substrates. In Staphylococcus aureus (strain MSSA476), this protein is Energy-coupling factor transporter ATP-binding protein EcfA1.